Reading from the N-terminus, the 147-residue chain is Large ribosomal subunit protein uL13 (147 aa).

This sequence belongs to the universal ribosomal protein uL13 family. Part of the 50S ribosomal subunit.

This protein is one of the early assembly proteins of the 50S ribosomal subunit, although it is not seen to bind rRNA by itself. It is important during the early stages of 50S assembly. This chain is Large ribosomal subunit protein uL13, found in Frankia casuarinae (strain DSM 45818 / CECT 9043 / HFP020203 / CcI3).